The following is a 193-amino-acid chain: MIFNFLNKASNKTHTKLLLFSSIRNRILINNISSTSKWSSINNNNKQSSVSKTNIFIITTHNKQQQQLSKSFSTINNNTKPISDVNLFHDIVDEEFELFVDRLEILSEANTCEGFEVEGNDGVLTIIVGNKGTYVINKQTPNRQIWWSSPLSGPKRFDYDSVEKRWVDNRDGTPLRQLLNSEINTLCKYDMEI.

Residues 1 to 72 constitute a mitochondrion transit peptide; sequence MIFNFLNKAS…KQQQQLSKSF (72 aa).

The protein belongs to the frataxin family. As to quaternary structure, monomer. Oligomer.

Its subcellular location is the mitochondrion. It carries out the reaction 4 Fe(2+) + O2 + 4 H(+) = 4 Fe(3+) + 2 H2O. Its function is as follows. Promotes the biosynthesis of heme as well as the assembly and repair of iron-sulfur clusters by delivering Fe(2+) to proteins involved in these pathways. May play a role in the protection against iron-catalyzed oxidative stress through its ability to catalyze the oxidation of Fe(2+) to Fe(3+). May be able to store large amounts of the metal in the form of a ferrihydrite mineral by oligomerization. In Dictyostelium discoideum (Social amoeba), this protein is Frataxin, mitochondrial (fxn).